Reading from the N-terminus, the 182-residue chain is UPF0316 protein BCQ_3166 (182 aa).

3 consecutive transmembrane segments (helical) span residues Leu6 to Val26, Ser32 to Phe52, and Trp58 to Ile78.

This sequence belongs to the UPF0316 family.

It is found in the cell membrane. This Bacillus cereus (strain Q1) protein is UPF0316 protein BCQ_3166.